Consider the following 370-residue polypeptide: DNA replication and repair protein RecF (370 aa).

30–37 (GENAQGKT) is an ATP binding site.

This sequence belongs to the RecF family.

Its subcellular location is the cytoplasm. Its function is as follows. The RecF protein is involved in DNA metabolism; it is required for DNA replication and normal SOS inducibility. RecF binds preferentially to single-stranded, linear DNA. It also seems to bind ATP. The sequence is that of DNA replication and repair protein RecF from Bacillus velezensis (strain DSM 23117 / BGSC 10A6 / LMG 26770 / FZB42) (Bacillus amyloliquefaciens subsp. plantarum).